We begin with the raw amino-acid sequence, 282 residues long: 4-diphosphocytidyl-2-C-methyl-D-erythritol kinase (282 aa).

Lys9 is an active-site residue. An ATP-binding site is contributed by 98–108 (PMGGGLGGGSS). The active site involves Asp140.

This sequence belongs to the GHMP kinase family. IspE subfamily. As to quaternary structure, homodimer.

The catalysed reaction is 4-CDP-2-C-methyl-D-erythritol + ATP = 4-CDP-2-C-methyl-D-erythritol 2-phosphate + ADP + H(+). It functions in the pathway isoprenoid biosynthesis; isopentenyl diphosphate biosynthesis via DXP pathway; isopentenyl diphosphate from 1-deoxy-D-xylulose 5-phosphate: step 3/6. In terms of biological role, catalyzes the phosphorylation of the position 2 hydroxy group of 4-diphosphocytidyl-2C-methyl-D-erythritol. In Klebsiella pneumoniae (strain 342), this protein is 4-diphosphocytidyl-2-C-methyl-D-erythritol kinase.